Here is a 344-residue protein sequence, read N- to C-terminus: WW domain binding protein 1-like (344 aa).

Residues 42 to 62 (LWWFWLVWTIIIILSCCCVCH) form a helical membrane-spanning segment. Disordered stretches follow at residues 132-250 (LLPP…RFTG) and 302-321 (CLSS…PRPP). The segment covering 145-173 (PGADQPQGSQGAQSSPLSGPSRSSTRPPS) has biased composition (low complexity). Ser173 is subject to Phosphoserine. Over residues 212–228 (LDRDSECKEELLKDSSS) the composition is skewed to basic and acidic residues.

The protein resides in the membrane. This Rattus norvegicus (Rat) protein is WW domain binding protein 1-like (Wbp1l).